Here is a 361-residue protein sequence, read N- to C-terminus: Peptide chain release factor 1 (361 aa).

Glutamine 237 is subject to N5-methylglutamine. Residues 285-306 (QAEQSAQQTEQRRQLVGSGDRS) are disordered.

This sequence belongs to the prokaryotic/mitochondrial release factor family. Post-translationally, methylated by PrmC. Methylation increases the termination efficiency of RF1.

It localises to the cytoplasm. In terms of biological role, peptide chain release factor 1 directs the termination of translation in response to the peptide chain termination codons UAG and UAA. This is Peptide chain release factor 1 from Alkalilimnicola ehrlichii (strain ATCC BAA-1101 / DSM 17681 / MLHE-1).